A 196-amino-acid polypeptide reads, in one-letter code: Pyridoxal 5'-phosphate synthase subunit PdxT (196 aa).

47-49 (GES) lines the L-glutamine pocket. Cys-79 serves as the catalytic Nucleophile. L-glutamine contacts are provided by residues Arg-106 and 134 to 135 (IR). Active-site charge relay system residues include His-170 and Glu-172.

This sequence belongs to the glutaminase PdxT/SNO family. In the presence of PdxS, forms a dodecamer of heterodimers. Only shows activity in the heterodimer.

It catalyses the reaction aldehydo-D-ribose 5-phosphate + D-glyceraldehyde 3-phosphate + L-glutamine = pyridoxal 5'-phosphate + L-glutamate + phosphate + 3 H2O + H(+). It carries out the reaction L-glutamine + H2O = L-glutamate + NH4(+). It participates in cofactor biosynthesis; pyridoxal 5'-phosphate biosynthesis. In terms of biological role, catalyzes the hydrolysis of glutamine to glutamate and ammonia as part of the biosynthesis of pyridoxal 5'-phosphate. The resulting ammonia molecule is channeled to the active site of PdxS. The polypeptide is Pyridoxal 5'-phosphate synthase subunit PdxT (Halalkalibacterium halodurans (strain ATCC BAA-125 / DSM 18197 / FERM 7344 / JCM 9153 / C-125) (Bacillus halodurans)).